The following is a 431-amino-acid chain: Serine/threonine-protein kinase Sgk1 (431 aa).

The interval 1–60 (MTVKTEAAKGTLTYSRMRGMVAILIAFMKQRRMGLNDFIQKIANNSYACKHPEVQSILKI) is necessary for localization to the mitochondria. A disordered region spans residues 66–92 (PELMNANPSPPPSPSQQINLGPSSNPH). Position 74 is a phosphoserine (S74). At S78 the chain carries Phosphoserine; by MAPK7. Residues 81 to 91 (QQINLGPSSNP) are compositionally biased toward polar residues. The 258-residue stretch at 98 to 355 (FHFLKVIGKG…FMEIKSHVFF (258 aa)) folds into the Protein kinase domain. ATP is bound by residues 104-112 (IGKGSFGKV) and K127. The short motif at 131–141 (KKAILKKKEEK) is the Nuclear localization signal element. The active-site Proton acceptor is D222. T256 carries the phosphothreonine; by PDPK1 modification. The 76-residue stretch at 356–431 (SLINWDDLIN…SYAPPTDSFL (76 aa)) folds into the AGC-kinase C-terminal domain. Phosphothreonine; by PKA is present on T369. Phosphoserine occurs at positions 397, 401, and 422.

This sequence belongs to the protein kinase superfamily. AGC Ser/Thr protein kinase family. As to quaternary structure, homodimer; disulfide-linked. Forms a trimeric complex with FBXW7 and NOTCH1. Interacts with MAPK3/ERK1, MAPK1/ERK2, MAP2K1/MEK1, MAP2K2/MEK2, NEDD4, NEDD4L, MAPT/TAU, MAPK7, CREB1, SLC9A3R2/NHERF2 and KCNJ1/ROMK1. Associates with the mammalian target of rapamycin complex 2 (mTORC2) via an interaction with MAPKAP1/SIN1. Post-translationally, regulated by phosphorylation. Activated by phosphorylation on Ser-422 by mTORC2, transforming it into a substrate for PDPK1 which phosphorylates it on Thr-256. Phosphorylation on Ser-397 and Ser-401 are also essential for its activity. Phosphorylation on Ser-78 by MAPK7 is required for growth factor-induced cell cycle progression. Ubiquitinated by NEDD4L; which promotes proteasomal degradation. Ubiquitinated by SYVN1 at the endoplasmic reticulum; which promotes rapid proteasomal degradation and maintains a high turnover rate in resting cells.

The protein localises to the cytoplasm. It localises to the nucleus. The protein resides in the endoplasmic reticulum membrane. Its subcellular location is the cell membrane. It is found in the mitochondrion. The enzyme catalyses L-seryl-[protein] + ATP = O-phospho-L-seryl-[protein] + ADP + H(+). It carries out the reaction L-threonyl-[protein] + ATP = O-phospho-L-threonyl-[protein] + ADP + H(+). Two specific sites, one in the kinase domain (Thr-256) and the other in the C-terminal regulatory region (Ser-422), need to be phosphorylated for its full activation. Phosphorylation at Ser-397 and Ser-401 are also essential for its activity. Activated by WNK1, WNK2, WNK3 and WNK4; which promote phosphorylation by mTORC2. In terms of biological role, serine/threonine-protein kinase which is involved in the regulation of a wide variety of ion channels, membrane transporters, cellular enzymes, transcription factors, neuronal excitability, cell growth, proliferation, survival, migration and apoptosis. Plays an important role in cellular stress response. Contributes to regulation of renal Na(+) retention, renal K(+) elimination, salt appetite, gastric acid secretion, intestinal Na(+)/H(+) exchange and nutrient transport, insulin-dependent salt sensitivity of blood pressure, salt sensitivity of peripheral glucose uptake, cardiac repolarization and memory consolidation. Up-regulates Na(+) channels: SCNN1A/ENAC, SCN5A and ASIC1/ACCN2, K(+) channels: KCNJ1/ROMK1, KCNA1-5, KCNQ1-5 and KCNE1, epithelial Ca(2+) channels: TRPV5 and TRPV6, chloride channels: BSND, CLCN2 and CFTR, glutamate transporters: SLC1A3/EAAT1, SLC1A2 /EAAT2, SLC1A1/EAAT3, SLC1A6/EAAT4 and SLC1A7/EAAT5, amino acid transporters: SLC1A5/ASCT2, SLC38A1/SN1 and SLC6A19, creatine transporter: SLC6A8, Na(+)/dicarboxylate cotransporter: SLC13A2/NADC1, Na(+)-dependent phosphate cotransporter: SLC34A2/NAPI-2B, glutamate receptor: GRIK2/GLUR6. Up-regulates carriers: SLC9A3/NHE3, SLC12A1/NKCC2, SLC12A3/NCC, SLC5A3/SMIT, SLC2A1/GLUT1, SLC5A1/SGLT1 and SLC15A2/PEPT2. Regulates enzymes: GSK3A/B, PMM2 and Na(+)/K(+) ATPase, and transcription factors: CTNNB1 and nuclear factor NF-kappa-B. Stimulates sodium transport into epithelial cells by enhancing the stability and expression of SCNN1A/ENAC. This is achieved by phosphorylating the NEDD4L ubiquitin E3 ligase, promoting its interaction with 14-3-3 proteins, thereby preventing it from binding to SCNN1A/ENAC and targeting it for degradation. Regulates store-operated Ca(+2) entry (SOCE) by stimulating ORAI1 and STIM1. Regulates KCNJ1/ROMK1 directly via its phosphorylation or indirectly via increased interaction with SLC9A3R2/NHERF2. Phosphorylates MDM2 and activates MDM2-dependent ubiquitination of p53/TP53. Phosphorylates MAPT/TAU and mediates microtubule depolymerization and neurite formation in hippocampal neurons. Phosphorylates SLC2A4/GLUT4 and up-regulates its activity. Phosphorylates APBB1/FE65 and promotes its localization to the nucleus. Phosphorylates MAPK1/ERK2 and activates it by enhancing its interaction with MAP2K1/MEK1 and MAP2K2/MEK2. Phosphorylates FBXW7 and plays an inhibitory role in the NOTCH1 signaling. Phosphorylates FOXO1 resulting in its relocalization from the nucleus to the cytoplasm. Phosphorylates FOXO3, promoting its exit from the nucleus and interference with FOXO3-dependent transcription. Phosphorylates BRAF and MAP3K3/MEKK3 and inhibits their activity. Phosphorylates SLC9A3/NHE3 in response to dexamethasone, resulting in its activation and increased localization at the cell membrane. Phosphorylates CREB1. Necessary for vascular remodeling during angiogenesis. This is Serine/threonine-protein kinase Sgk1 (SGK1) from Macaca fascicularis (Crab-eating macaque).